The sequence spans 584 residues: Arginine--tRNA ligase (584 aa).

Positions 126–136 (PNIAKEMHVGH) match the 'HIGH' region motif.

This sequence belongs to the class-I aminoacyl-tRNA synthetase family. In terms of assembly, monomer.

Its subcellular location is the cytoplasm. It catalyses the reaction tRNA(Arg) + L-arginine + ATP = L-arginyl-tRNA(Arg) + AMP + diphosphate. In Synechococcus elongatus (strain ATCC 33912 / PCC 7942 / FACHB-805) (Anacystis nidulans R2), this protein is Arginine--tRNA ligase.